The sequence spans 123 residues: Methicillin resistance regulatory protein MecI (123 aa).

A DNA-binding region (H-T-H motif) is located at residues 7-71 (EISSAEWEFM…KDNKIFQYYS (65 aa)). Residues 74–123 (EESDIKYKTSKNFINKVYKGGFNSLVLNFVEKEDLSQDEIEELRNILNKK) are important for dimerization.

It belongs to the BlaI transcriptional regulatory family. In terms of assembly, monomer and homodimer. Post-translationally, upon exposure to beta-lactams, proteolytic cleavage at a single site impairs dimerization and abolishes repressor activity.

The protein localises to the cytoplasm. Transcriptional repressor that constitutively blocks the transcription of the gene for the penicillin-binding protein MecA. Binds DNA as a dimer. The sequence is that of Methicillin resistance regulatory protein MecI (mecI) from Staphylococcus aureus (strain Mu50 / ATCC 700699).